The following is a 239-amino-acid chain: Myogenic factor 6 (239 aa).

The segment at 27-64 (QHLDMPGVSPLYDGNHSPLSPGPDNVPSETGGESSGDE) is disordered. One can recognise a bHLH domain in the interval 96-147 (DRRKAATLRERRRLKKINEAFDALKRKSVANPNQRLPKVEILRSAISYIERL). The disordered stretch occupies residues 155–184 (DEQERGQSGASDTRNDKEQNRPSGGDYCWK).

In terms of assembly, efficient DNA binding requires dimerization with another bHLH protein.

It localises to the nucleus. Its function is as follows. Involved in muscle differentiation (myogenic factor). Induces fibroblasts to differentiate into myoblasts. Probable sequence specific DNA-binding protein. The polypeptide is Myogenic factor 6 (myf6) (Tetraodon nigroviridis (Spotted green pufferfish)).